Reading from the N-terminus, the 80-residue chain is MSLLVPVRTHQRHHPVVVELFVWEGTNDPTTEWPPLTRRNIHRLWQYARTLGGDDNVATAQRKLWRKANWLAFLEHVQRT.

The protein is Protein Vpy (vpy) of Bos taurus (Bovine).